Consider the following 529-residue polypeptide: Inosine-5'-monophosphate dehydrogenase (529 aa).

2 CBS domains span residues 129-185 (MVTD…SKQV) and 189-246 (MTKA…PLAT). Residues Asp-283 and 334–336 (GVG) each bind NAD(+). The K(+) site is built by Gly-336 and Gly-338. Residue Ser-339 participates in IMP binding. Position 341 (Cys-341) interacts with K(+). Catalysis depends on Cys-341, which acts as the Thioimidate intermediate. Residues 374–376 (DGG), 397–398 (GS), and 421–425 (YRGMG) each bind IMP. Catalysis depends on Arg-443, which acts as the Proton acceptor. Glu-458 is an IMP binding site. K(+) contacts are provided by Glu-511, Ser-512, and His-513.

This sequence belongs to the IMPDH/GMPR family. In terms of assembly, homotetramer. The cofactor is K(+).

The enzyme catalyses IMP + NAD(+) + H2O = XMP + NADH + H(+). It functions in the pathway purine metabolism; XMP biosynthesis via de novo pathway; XMP from IMP: step 1/1. Mycophenolic acid (MPA) is a non-competitive inhibitor that prevents formation of the closed enzyme conformation by binding to the same site as the amobile flap. In contrast, mizoribine monophosphate (MZP) is a competitive inhibitor that induces the closed conformation. MPA is a potent inhibitor of mammalian IMPDHs but a poor inhibitor of the bacterial enzymes. MZP is a more potent inhibitor of bacterial IMPDH. Functionally, catalyzes the conversion of inosine 5'-phosphate (IMP) to xanthosine 5'-phosphate (XMP), the first committed and rate-limiting step in the de novo synthesis of guanine nucleotides, and therefore plays an important role in the regulation of cell growth. This chain is Inosine-5'-monophosphate dehydrogenase, found in Mycobacterium bovis (strain ATCC BAA-935 / AF2122/97).